The sequence spans 417 residues: Methyltransferase/ribosomally synthesized cyclic peptide omphalotin A precursor ophMA (417 aa).

Positions 1-251 (METSTQTKAG…GVSTFYIPPK (251 aa)) are methyltransferase domain. Active-site residues include Arg-72, Tyr-76, and Tyr-98. Residues Tyr-98, His-100, Val-103, Ala-130, Gln-172, Ala-213, Ser-244, and Thr-245 each coordinate S-adenosyl-L-methionine. A clasp domain region spans residues 252 to 378 (ARKASNLDII…WAIRCAMKNM (127 aa)). The tract at residues 379–399 (PSSLLDAARESGEEASQNGFP) is precursor leader. N-methylvaline occurs at positions 401, 403, and 404. Gly-405 bears the N-methylglycine mark. At Val-406 the chain carries N-methylvaline. Ile-407 is modified (N-methylisoleucine). N-methylglycine is present on Gly-408. At Ile-410 the chain carries N-methylisoleucine. Gly-411 carries the N-methylglycine modification. Val-413 is subject to N-methylvaline.

In the N-terminal section; belongs to the precorrin methyltransferase family. Homodimer. OphMA automethylates at Val-401, Val-403, Val-404, Gly-405, Val-406, Ile-407, Gly-408, Ile-410, Gly-411 and Val-413 before being processed by the prolyloligopeptidase ophP which likely forms a peptidyl ester upon removal of the follower propeptide, which then undergoes macrocyclization with the N-terminus of the modified core peptide. Peptide backbone alpha-N-methylations change the physicochemical properties of amide bonds to provide structural constraints and other favorable characteristics including biological membrane permeability to peptides.

Its pathway is mycotoxin biosynthesis. Its function is as follows. Fusion protein of the methyltransferase ophM and the omphalotin core peptide; part of the gene cluster that mediates the biosynthesis of omphalotin A, a highly methylated cyclic dodecapeptide with nematodicidal activity. Omphalotin A derives from the C-terminus of the ophMA protein, and it is the ophMA protein that methylates its own C-terminus using S-adenosyl methionine (SAM). The C-terminus is subsequently cleaved off and macrocyclized by the prolyloligopeptidase ophP to give the final product. This chain is Methyltransferase/ribosomally synthesized cyclic peptide omphalotin A precursor ophMA, found in Omphalotus olearius (Jack o'lantern).